Here is a 154-residue protein sequence, read N- to C-terminus: Lipoprotein signal peptidase (154 aa).

Transmembrane regions (helical) follow at residues 55 to 75 (GHMWFFYLITVIVIGIIIYIM) and 84 to 104 (LFSISLAFILGGAIGNFIDRV). Active-site residues include D111 and D129. A helical membrane pass occupies residues 124–144 (IFNVADASLSVGVVLMLVYVF).

This sequence belongs to the peptidase A8 family.

It is found in the cell membrane. It catalyses the reaction Release of signal peptides from bacterial membrane prolipoproteins. Hydrolyzes -Xaa-Yaa-Zaa-|-(S,diacylglyceryl)Cys-, in which Xaa is hydrophobic (preferably Leu), and Yaa (Ala or Ser) and Zaa (Gly or Ala) have small, neutral side chains.. It functions in the pathway protein modification; lipoprotein biosynthesis (signal peptide cleavage). In terms of biological role, this protein specifically catalyzes the removal of signal peptides from prolipoproteins. The polypeptide is Lipoprotein signal peptidase (Listeria welshimeri serovar 6b (strain ATCC 35897 / DSM 20650 / CCUG 15529 / CIP 8149 / NCTC 11857 / SLCC 5334 / V8)).